The following is a 352-amino-acid chain: C-C chemokine receptor type 5 (352 aa).

Over 1–30 the chain is Extracellular; it reads MDYQVSSPTYDIDYYTSEPCQKINVKQIAA. A Sulfotyrosine modification is found at Tyr3. Ser6 and Ser7 each carry an O-linked (GalNAc...) serine glycan. Residues Tyr10, Tyr14, and Tyr15 each carry the sulfotyrosine modification. 2 disulfide bridges follow: Cys20–Cys269 and Cys101–Cys178. The helical transmembrane segment at 31–58 threads the bilayer; that stretch reads RLLPPLYSLVFIFGFVGNILVVLILINC. The Cytoplasmic segment spans residues 59–68; the sequence is KRLKSMTDIY. Residues 69-89 traverse the membrane as a helical segment; that stretch reads LLNLAISDLLFLLTVPFWAHY. Topologically, residues 90-102 are extracellular; sequence AAAQWDFGNTMCQ. Residues 103-124 traverse the membrane as a helical segment; it reads LLTGLYFIGFFSGIFFIILLTI. At 125-141 the chain is on the cytoplasmic side; the sequence is DRYLAIVHAVFALKART. Residues 142 to 166 form a helical membrane-spanning segment; sequence VTFGVVTSVITWVVAVFASLPRIIF. Residues 167–198 lie on the Extracellular side of the membrane; sequence TRSQREGLHYTCSSHFPYSQYQFWKNFQTLKI. Residues 199-218 form a helical membrane-spanning segment; sequence VILGLVLPLLVMVICYSGIL. Over 219-235 the chain is Cytoplasmic; it reads KTLLRCRNEKKRHRAVR. A helical membrane pass occupies residues 236-260; that stretch reads LIFTIMIVYFLFWAPYNIVLLLNTF. The Extracellular portion of the chain corresponds to 261 to 277; the sequence is QEFFGLNNCSSSNRLDQ. A helical transmembrane segment spans residues 278-301; that stretch reads AMQVTETLGMTHCCINPIIYAFVG. Residues 302-352 lie on the Cytoplasmic side of the membrane; the sequence is EKFRNYLLVFFQKHIAKRFCKCCSIFQQEAPERASSVYTRSTGEQETSVGL. Residues Cys321, Cys323, and Cys324 are each lipidated (S-palmitoyl cysteine). A phosphoserine; by BARK1 mark is found at Ser336, Ser337, Ser342, and Ser349.

This sequence belongs to the G-protein coupled receptor 1 family. In terms of assembly, interacts with PRAF2. Efficient ligand binding to CCL3/MIP-1alpha and CCL4/MIP-1beta requires sulfation, O-glycosylation and sialic acid modifications. Glycosylation on Ser-6 is required for efficient binding of CCL4. Interacts with GRK2. Interacts with ARRB1 and ARRB2. Interacts with CNIH4. Interacts with S100A4; this interaction stimulates T-lymphocyte chemotaxis. Sulfated on at least 2 of the N-terminal tyrosines. Sulfation is required for efficient binding of the chemokines, CCL3 and CCL4. In terms of processing, palmitoylation in the C-terminal is important for cell surface expression. Post-translationally, phosphorylation on serine residues in the C-terminal is stimulated by binding CC chemokines especially by APO-RANTES. O-glycosylated, but not N-glycosylated. Ser-6 appears to be the major site even if Ser-7 may be also O-glycosylated. Also sialylated glycans present which contribute to chemokine binding. Thr-16 and Ser-17 may also be glycosylated and, if so, with small moieties such as a T-antigen.

Its subcellular location is the cell membrane. Its function is as follows. Receptor for a number of inflammatory CC-chemokines including CCL3/MIP-1-alpha, CCL4/MIP-1-beta and RANTES and subsequently transduces a signal by increasing the intracellular calcium ion level. May play a role in the control of granulocytic lineage proliferation or differentiation. Participates in T-lymphocyte migration to the infection site by acting as a chemotactic receptor. The sequence is that of C-C chemokine receptor type 5 (CCR5) from Chlorocebus tantalus (Tantalus monkey).